A 273-amino-acid polypeptide reads, in one-letter code: Dermonecrotic toxin LruSicTox-alphaIC1c (273 aa).

His-5 is an active-site residue. Mg(2+) is bound by residues Glu-25 and Asp-27. His-41 (nucleophile) is an active-site residue. 2 cysteine pairs are disulfide-bonded: Cys-45–Cys-51 and Cys-47–Cys-190. Asp-85 is a binding site for Mg(2+).

It belongs to the arthropod phospholipase D family. Class II subfamily. Mg(2+) is required as a cofactor. Expressed by the venom gland.

The protein resides in the secreted. The catalysed reaction is an N-(acyl)-sphingosylphosphocholine = an N-(acyl)-sphingosyl-1,3-cyclic phosphate + choline. It catalyses the reaction an N-(acyl)-sphingosylphosphoethanolamine = an N-(acyl)-sphingosyl-1,3-cyclic phosphate + ethanolamine. It carries out the reaction a 1-acyl-sn-glycero-3-phosphocholine = a 1-acyl-sn-glycero-2,3-cyclic phosphate + choline. The enzyme catalyses a 1-acyl-sn-glycero-3-phosphoethanolamine = a 1-acyl-sn-glycero-2,3-cyclic phosphate + ethanolamine. Its function is as follows. Dermonecrotic toxins cleave the phosphodiester linkage between the phosphate and headgroup of certain phospholipids (sphingolipid and lysolipid substrates), forming an alcohol (often choline) and a cyclic phosphate. This toxin acts on sphingomyelin (SM). It may also act on ceramide phosphoethanolamine (CPE), lysophosphatidylcholine (LPC) and lysophosphatidylethanolamine (LPE), but not on lysophosphatidylserine (LPS), and lysophosphatidylglycerol (LPG). It acts by transphosphatidylation, releasing exclusively cyclic phosphate products as second products. Induces dermonecrosis, hemolysis, increased vascular permeability, edema, inflammatory response, and platelet aggregation. This is Dermonecrotic toxin LruSicTox-alphaIC1c from Loxosceles rufescens (Mediterranean recluse spider).